The sequence spans 156 residues: Small ribosomal subunit protein uS7 (156 aa).

Belongs to the universal ribosomal protein uS7 family. As to quaternary structure, part of the 30S ribosomal subunit. Contacts proteins S9 and S11.

Functionally, one of the primary rRNA binding proteins, it binds directly to 16S rRNA where it nucleates assembly of the head domain of the 30S subunit. Is located at the subunit interface close to the decoding center, probably blocks exit of the E-site tRNA. This chain is Small ribosomal subunit protein uS7, found in Shewanella denitrificans (strain OS217 / ATCC BAA-1090 / DSM 15013).